The primary structure comprises 581 residues: Adenine deaminase (581 aa).

The protein belongs to the metallo-dependent hydrolases superfamily. Adenine deaminase family. The cofactor is Mn(2+).

It carries out the reaction adenine + H2O + H(+) = hypoxanthine + NH4(+). The polypeptide is Adenine deaminase (Brucella suis biovar 1 (strain 1330)).